Here is a 577-residue protein sequence, read N- to C-terminus: Mitochondrial-processing peptidase subunit alpha (577 aa).

A mitochondrion-targeting transit peptide spans 1–35 (MLNRFRPARLVAQSSRCLPLTRARAGPLPVNNART). A disordered region spans residues 259 to 301 (SDAPGLSRTGSETSVDSLVSESSEASSESSSSSSDSSESSGGL). Over residues 269–301 (SETSVDSLVSESSEASSESSSSSSDSSESSGGL) the composition is skewed to low complexity.

This sequence belongs to the peptidase M16 family. As to quaternary structure, heterodimer of mpp (alpha) and pep (beta) subunits, forming the mitochondrial processing protease (MPP) in which mpp is involved in substrate recognition and binding and pep is the catalytic subunit.

It localises to the mitochondrion matrix. Its function is as follows. Substrate recognition and binding subunit of the essential mitochondrial processing protease (MPP), which cleaves the mitochondrial sequence off newly imported precursors proteins. In Neurospora crassa (strain ATCC 24698 / 74-OR23-1A / CBS 708.71 / DSM 1257 / FGSC 987), this protein is Mitochondrial-processing peptidase subunit alpha.